Reading from the N-terminus, the 386-residue chain is Putative gustatory receptor 22b (386 aa).

At 1 to 48 (MFGSSREIRPYLARQMLKTTLYGSWLLGIFPFTLDSGKRIRQLRRSRC) the chain is on the cytoplasmic side. The chain crosses the membrane as a helical span at residues 49-69 (LTLYGLVLNYFLIFTLIRLAF). The Extracellular segment spans residues 70-89 (EYRKHKLEAFKRNPVLEMIN). A helical transmembrane segment spans residues 90–110 (VVIGIINVLSALIVHFMNFWG). Topologically, residues 111–155 (SRKVGEICNELLILEYQDFEGLNGRNCPNFNCFVIQKCLTILGQL) are cytoplasmic. Residues 156 to 176 (LSFFTLNFALPGLEFHICLVL) form a helical membrane-spanning segment. Topologically, residues 177 to 178 (LS) are extracellular. A helical transmembrane segment spans residues 179 to 199 (CLMEFSLNLNIMHYHVGVLLI). At 200 to 254 (YRYVWLINEQLKDLVSQLKLNPETDFSRIHQFLSLYKRLLELNRKLVIAYEYQMT) the chain is on the cytoplasmic side. Residues 255–275 (LFIIAQLSGNIVVIYFLIVYG) form a helical membrane-spanning segment. Residues 276-282 (LSMRTYS) are Extracellular-facing. A helical transmembrane segment spans residues 283 to 303 (IFLVAFPNSLLINIWDFWLCI). At 304 to 363 (AACDLTEKAGDETAIILKIFSDLEHRDDKLEMSVNEFAWLCSHRKFRFQLCGLFSMNCRM) the chain is on the cytoplasmic side. The chain crosses the membrane as a helical span at residues 364–384 (GFKMIITTFLYLVYLVQFDYM). Topologically, residues 385-386 (NL) are extracellular.

It belongs to the insect chemoreceptor superfamily. Gustatory receptor (GR) family. Gr22e subfamily. Expressed in taste bristles in the foreleg and labial palps. In larvae, is expressed in neurons of the dorsal and posterior pharyngeal sense organs. Expressed in taste neurons that mediate sensitivity to bitter compounds.

Its subcellular location is the cell membrane. Functionally, probable gustatory receptor which mediates acceptance or avoidance behavior, depending on its substrates. Seems to be involved in the sensing of bitter taste since it is expressed in neurons that mediate sensitivity to bitter compounds. This Drosophila melanogaster (Fruit fly) protein is Putative gustatory receptor 22b.